Reading from the N-terminus, the 253-residue chain is Indole-3-glycerol phosphate synthase (253 aa).

The protein belongs to the TrpC family.

It carries out the reaction 1-(2-carboxyphenylamino)-1-deoxy-D-ribulose 5-phosphate + H(+) = (1S,2R)-1-C-(indol-3-yl)glycerol 3-phosphate + CO2 + H2O. It participates in amino-acid biosynthesis; L-tryptophan biosynthesis; L-tryptophan from chorismate: step 4/5. The chain is Indole-3-glycerol phosphate synthase from Exiguobacterium sp. (strain ATCC BAA-1283 / AT1b).